We begin with the raw amino-acid sequence, 338 residues long: tRNA-specific 2-thiouridylase MnmA (338 aa).

ATP is bound by residues 6 to 13 (AMSGGVDS) and Met-32. Cys-92 serves as the catalytic Nucleophile. Residues Cys-92 and Cys-186 are joined by a disulfide bond. Gly-116 serves as a coordination point for ATP. The interaction with tRNA stretch occupies residues 134–136 (KDQ). The active-site Cysteine persulfide intermediate is Cys-186. The tract at residues 288–289 (RY) is interaction with tRNA.

This sequence belongs to the MnmA/TRMU family.

It localises to the cytoplasm. It catalyses the reaction S-sulfanyl-L-cysteinyl-[protein] + uridine(34) in tRNA + AH2 + ATP = 2-thiouridine(34) in tRNA + L-cysteinyl-[protein] + A + AMP + diphosphate + H(+). Catalyzes the 2-thiolation of uridine at the wobble position (U34) of tRNA, leading to the formation of s(2)U34. The chain is tRNA-specific 2-thiouridylase MnmA from Campylobacter jejuni subsp. jejuni serotype O:2 (strain ATCC 700819 / NCTC 11168).